Consider the following 102-residue polypeptide: Large ribosomal subunit protein bL21 (102 aa).

It belongs to the bacterial ribosomal protein bL21 family. In terms of assembly, part of the 50S ribosomal subunit. Contacts protein L20.

Functionally, this protein binds to 23S rRNA in the presence of protein L20. This Shouchella clausii (strain KSM-K16) (Alkalihalobacillus clausii) protein is Large ribosomal subunit protein bL21.